Reading from the N-terminus, the 394-residue chain is Teichoic acid poly(glycerol phosphate) polymerase (394 aa).

This sequence belongs to the CDP-glycerol glycerophosphotransferase family.

The protein resides in the cell membrane. It catalyses the reaction 4-O-[(2R)-glycerylphospho]-N-acetyl-beta-D-mannosaminyl-(1-&gt;4)-N-acetyl-alpha-D-glucosaminyl di-trans,octa-cis-undecaprenyl diphosphate + n CDP-glycerol = 4-O-{[(2R)-1-glycerylphospho](n)-(2R)-1-glycerylphospho}-N-acetyl-beta-D-mannosaminyl-(1-&gt;4)-N-acetyl-alpha-D-glucosaminyl undecaprenyl diphosphate + n CMP + n H(+). In terms of biological role, catalyzes the addition of further 2-8 glycerol phosphate units from CDP-glycerol to the single glycerol phosphate unit bound to the prenolpyrophosphate-linked disaccharide. The function in the cell is unknown since the product is not part of the poly(ribitol phosphate) teichoic acid found in the cell walls. The polypeptide is Teichoic acid poly(glycerol phosphate) polymerase (tarF) (Bacillus spizizenii (strain ATCC 23059 / NRRL B-14472 / W23) (Bacillus subtilis subsp. spizizenii)).